The chain runs to 544 residues: Potential vesicular glutamate transporter vglu-3 (544 aa).

Over 1-49 (MPNGSIRNCANAVADTVRQTFSRKTWEHKEQLQTITEQKKFFLRKVRWQ) the chain is Cytoplasmic. The chain crosses the membrane as a helical span at residues 50-70 (IAILAHFGFAISFGIRSNFGV). The Extracellular portion of the chain corresponds to 71–104 (AKNRMVNNFTDAYGEVHEREFLWTGAEVGMMESS). An N-linked (GlcNAc...) asparagine glycan is attached at Asn-78. Residues 105-125 (FFYGYAASQIPAGVLAAKFAP) form a helical membrane-spanning segment. Over 126–127 (NK) the chain is Cytoplasmic. A helical membrane pass occupies residues 128–148 (IFMLGILVASFMNILSAISFN). The Extracellular segment spans residues 149 to 154 (FHPYTD). Residues 155 to 175 (IFVMVVQAVQGLALGVLYPAM) form a helical membrane-spanning segment. Over 176 to 193 (HGVWKFWAPPLERSKLAT) the chain is Cytoplasmic. Residues 194–214 (TAFTGSSVGVMTGLPASAYLV) traverse the membrane as a helical segment. The Extracellular segment spans residues 215–219 (SHFSW). A helical transmembrane segment spans residues 220–240 (STPFYVFGVVGIIWSLIWMYV). Over 241–285 (SSHSPETHGYISDDEKKQVTEKIGDVAVKNMSLTTLPWRDMMTSS) the chain is Cytoplasmic. The chain crosses the membrane as a helical span at residues 286-306 (AVWAIIICTFCRSWGFFLLLG). Topologically, residues 307–323 (NQLTYMKDVLHIDIKNS) are extracellular. Residues 324–344 (GFISIFPQFGMCIVTLATGQL) form a helical membrane-spanning segment. Topologically, residues 345 to 360 (CDYLRSSGKMSTEAVR) are cytoplasmic. The helical transmembrane segment at 361-381 (KSVNTFGFTVEAMMLGCLAFV) threads the bilayer. At 382–384 (RDP) the chain is on the extracellular side. The chain crosses the membrane as a helical span at residues 385-405 (VIAVTCLVIACTGSGSVLSGF). At 406-416 (NVNHFDIAPRY) the chain is on the cytoplasmic side. The helical transmembrane segment at 417–437 (APILMGIANGLGAVAGVGGMV) threads the bilayer. At 438–450 (TNTVTYQNPDGWK) the chain is on the extracellular side. A helical transmembrane segment spans residues 451–471 (WVFLLAMAIDIFGVIFFLIFA). Over 472–544 (KGDVLPWARE…APAEKSESSS (73 aa)) the chain is Cytoplasmic. Residues 501-544 (SLSRKTRNREGDTSYEKMEEDSEMKPCSKKVEARAPAEKSESSS) are disordered. The span at 508–544 (NREGDTSYEKMEEDSEMKPCSKKVEARAPAEKSESSS) shows a compositional bias: basic and acidic residues.

This sequence belongs to the major facilitator superfamily. Sodium/anion cotransporter family. VGLUT subfamily.

It is found in the membrane. This chain is Potential vesicular glutamate transporter vglu-3 (vglu-3), found in Caenorhabditis elegans.